The following is a 410-amino-acid chain: 2-hydroxy-5-methyl-1-naphthoate 7-hydroxylase (410 aa).

Cys350 serves as a coordination point for heme.

This sequence belongs to the cytochrome P450 family. Heme is required as a cofactor.

It carries out the reaction 2-hydroxy-5-methyl-1-naphthoate + 2 reduced [2Fe-2S]-[ferredoxin] + O2 + 2 H(+) = 2,7-dihydroxy-5-methyl-1-naphthoate + 2 oxidized [2Fe-2S]-[ferredoxin] + H2O. It participates in antibiotic biosynthesis. Its function is as follows. Involved in the biosynthesis of the naphthoic acid (NA) moiety in the chromophore of the enedyine antitumor antibiotic neocarzinostatin (NCS). Catalyzes the hydroxylation at C-7 position of 2-hydroxy-5-methyl-1-naphthoate to yield 2,7-dihydroxy-5-methyl-1-naphthoate. This Streptomyces carzinostaticus protein is 2-hydroxy-5-methyl-1-naphthoate 7-hydroxylase.